The primary structure comprises 514 residues: Putative selenium-binding protein (514 aa).

Belongs to the selenium-binding protein family.

In Caenorhabditis briggsae, this protein is Putative selenium-binding protein.